We begin with the raw amino-acid sequence, 62 residues long: Cytotoxin-like basic protein (62 aa).

Disulfide bonds link C3-C22, C15-C40, C44-C55, and C56-C61.

This sequence belongs to the three-finger toxin family. Short-chain subfamily. Orphan group XV sub-subfamily. Expressed by the venom gland.

It localises to the secreted. It is found in the target cell membrane. Its function is as follows. Has low cytotoxic activity. This Naja naja (Indian cobra) protein is Cytotoxin-like basic protein.